A 281-amino-acid polypeptide reads, in one-letter code: ATP phosphoribosyltransferase (281 aa).

The protein belongs to the ATP phosphoribosyltransferase family. Long subfamily. Mg(2+) is required as a cofactor.

It localises to the cytoplasm. It carries out the reaction 1-(5-phospho-beta-D-ribosyl)-ATP + diphosphate = 5-phospho-alpha-D-ribose 1-diphosphate + ATP. The protein operates within amino-acid biosynthesis; L-histidine biosynthesis; L-histidine from 5-phospho-alpha-D-ribose 1-diphosphate: step 1/9. With respect to regulation, feedback inhibited by histidine. In terms of biological role, catalyzes the condensation of ATP and 5-phosphoribose 1-diphosphate to form N'-(5'-phosphoribosyl)-ATP (PR-ATP). Has a crucial role in the pathway because the rate of histidine biosynthesis seems to be controlled primarily by regulation of HisG enzymatic activity. The polypeptide is ATP phosphoribosyltransferase (Corynebacterium glutamicum (strain R)).